Reading from the N-terminus, the 435-residue chain is Ornithine decarboxylase (435 aa).

At Lys98 the chain carries N6-(pyridoxal phosphate)lysine. Residues Ser230, Gly268, and 301–304 (EPGR) contribute to the pyridoxal 5'-phosphate site. 344–345 (YD) provides a ligand contact to substrate. Cys380 acts as the Proton donor; shared with dimeric partner in catalysis. Asp381 lines the substrate pocket. Tyr409 serves as a coordination point for pyridoxal 5'-phosphate.

The protein belongs to the Orn/Lys/Arg decarboxylase class-II family. Homodimer. Only the dimer is catalytically active, as the active sites are constructed of residues from both monomers. Requires pyridoxal 5'-phosphate as cofactor.

The enzyme catalyses L-ornithine + H(+) = putrescine + CO2. The protein operates within amine and polyamine biosynthesis; putrescine biosynthesis via L-ornithine pathway; putrescine from L-ornithine: step 1/1. Its activity is regulated as follows. Inhibited by antizyme (AZ) in response to polyamine levels. AZ inhibits the assembly of the functional homodimer by binding to ODC monomers and targeting them for ubiquitin-independent proteolytic destruction by the 26S proteasome. Its function is as follows. Catalyzes the first and rate-limiting step of polyamine biosynthesis that converts ornithine into putrescine, which is the precursor for the polyamines, spermidine and spermine. Polyamines are essential for cell proliferation and are implicated in cellular processes, ranging from DNA replication to apoptosis. The sequence is that of Ornithine decarboxylase (ODC) from Capsicum annuum (Capsicum pepper).